Here is a 275-residue protein sequence, read N- to C-terminus: Exosome complex component RRP40 (275 aa).

Ala2 carries the N-acetylalanine modification. Residue Lys151 forms a Glycyl lysine isopeptide (Lys-Gly) (interchain with G-Cter in SUMO2) linkage.

The protein belongs to the RRP40 family. Component of the RNA exosome core complex (Exo-9), composed of EXOSC1, EXOSC2, EXOSC3, EXOSC4, EXOSC5, EXOSC6, EXOSC7, EXOSC8 and EXOSC9; within the complex interacts with EXOSC5 and EXOSC9. The catalytically inactive RNA exosome core complex (Exo-9) associates with the catalytic subunit EXOSC10/RRP6. Exo-9 may associate with DIS3 to form the nucleolar exosome complex, or DIS3L to form the cytoplasmic exosome complex. Exo-9 is formed by a hexameric base ring consisting of the heterodimers EXOSC4-EXOSC9, EXOSC5-EXOSC8 and EXOSC6-EXOSC7, and a cap ring consisting of EXOSC1, EXOSC2 and EXOSC3. The RNA exosome complex associates with cofactors C1D/RRP47, MPHOSPH6/MPP6 and MTREX/MTR4. Interacts with MPHOSPH6/MPP6; the interaction is direct. Interacts with GTPBP1. Interacts with ZC3HAV1. Interacts with DDX17 only in the presence of ZC3HAV1 in an RNA-independent manner. Interacts with DHX36; this interaction occurs in a RNase-insensitive manner. Interacts with HBS1L isoform 2.

It localises to the cytoplasm. Its subcellular location is the nucleus. The protein localises to the nucleolus. Functionally, non-catalytic component of the RNA exosome complex which has 3'-&gt;5' exoribonuclease activity and participates in a multitude of cellular RNA processing and degradation events. In the nucleus, the RNA exosome complex is involved in proper maturation of stable RNA species such as rRNA, snRNA and snoRNA, in the elimination of RNA processing by-products and non-coding 'pervasive' transcripts, such as antisense RNA species and promoter-upstream transcripts (PROMPTs), and of mRNAs with processing defects, thereby limiting or excluding their export to the cytoplasm. The RNA exosome may be involved in Ig class switch recombination (CSR) and/or Ig variable region somatic hypermutation (SHM) by targeting AICDA deamination activity to transcribed dsDNA substrates. In the cytoplasm, the RNA exosome complex is involved in general mRNA turnover and specifically degrades inherently unstable mRNAs containing AU-rich elements (AREs) within their 3' untranslated regions, and in RNA surveillance pathways, preventing translation of aberrant mRNAs. It seems to be involved in degradation of histone mRNA. The catalytic inactive RNA exosome core complex of 9 subunits (Exo-9) is proposed to play a pivotal role in the binding and presentation of RNA for ribonucleolysis, and to serve as a scaffold for the association with catalytic subunits and accessory proteins or complexes. EXOSC3 as peripheral part of the Exo-9 complex stabilizes the hexameric ring of RNase PH-domain subunits through contacts with EXOSC9 and EXOSC5. This is Exosome complex component RRP40 (EXOSC3) from Homo sapiens (Human).